Consider the following 240-residue polypeptide: Transposase for insertion sequence element IS3411 (240 aa).

Residues 125–240 (VAERPDQLWV…RASMVFTKRR (116 aa)) form the Integrase catalytic domain.

In terms of biological role, involved in the transposition of the insertion sequence. This Escherichia coli protein is Transposase for insertion sequence element IS3411.